We begin with the raw amino-acid sequence, 311 residues long: Probable lipid kinase YegS-like (311 aa).

In terms of domain architecture, DAGKc spans 9–140 (EHDGDTWLIL…VDVGTLGDDY (132 aa)). ATP contacts are provided by residues threonine 47, 73–79 (GDGTVNE), and serine 102. Mg(2+)-binding residues include lysine 221, aspartate 224, and leucine 226. Catalysis depends on glutamate 281, which acts as the Proton acceptor.

It belongs to the diacylglycerol/lipid kinase family. YegS lipid kinase subfamily. Requires Mg(2+) as cofactor. Ca(2+) is required as a cofactor.

It localises to the cytoplasm. Its function is as follows. Probably phosphorylates lipids; the in vivo substrate is unknown. This is Probable lipid kinase YegS-like from Chromohalobacter salexigens (strain ATCC BAA-138 / DSM 3043 / CIP 106854 / NCIMB 13768 / 1H11).